The sequence spans 82 residues: ATP synthase subunit c, chloroplastic (82 aa).

2 helical membrane passes run 3-23 and 57-77; these read PIIS…AAIG and LAFM…LLFA.

The protein belongs to the ATPase C chain family. In terms of assembly, F-type ATPases have 2 components, F(1) - the catalytic core - and F(0) - the membrane proton channel. F(1) has five subunits: alpha(3), beta(3), gamma(1), delta(1), epsilon(1). F(0) has four main subunits: a(1), b(1), b'(1) and c(10-14). The alpha and beta chains form an alternating ring which encloses part of the gamma chain. F(1) is attached to F(0) by a central stalk formed by the gamma and epsilon chains, while a peripheral stalk is formed by the delta, b and b' chains.

The protein localises to the plastid. It is found in the chloroplast thylakoid membrane. Its function is as follows. F(1)F(0) ATP synthase produces ATP from ADP in the presence of a proton or sodium gradient. F-type ATPases consist of two structural domains, F(1) containing the extramembraneous catalytic core and F(0) containing the membrane proton channel, linked together by a central stalk and a peripheral stalk. During catalysis, ATP synthesis in the catalytic domain of F(1) is coupled via a rotary mechanism of the central stalk subunits to proton translocation. Key component of the F(0) channel; it plays a direct role in translocation across the membrane. A homomeric c-ring of between 10-14 subunits forms the central stalk rotor element with the F(1) delta and epsilon subunits. The sequence is that of ATP synthase subunit c, chloroplastic from Phaeodactylum tricornutum (strain CCAP 1055/1).